The following is a 249-amino-acid chain: MTENQTTPDPGEPGSSADRPGGLVPTGDSAEFVAGRSRKGMFGVRGTGDTSGYGGLRLPAYVPAPAERPYGGWFDEVADGLFLALRERGVPAESVLQVTVDRGEITFYVDRDHLLEICRSLRDDPALRFEMCASVSGVDYGPEVPQRLHSVYHLLSMTYRRRIRLEVALDVDDPHVPSVVEVYPTADYQERETYDMFGIVYDGHPALTRILMPDDWDGHPQRKDYPLGGIPVEYKGAEIPPPDQRRAYS.

The tract at residues 1 to 29 (MTENQTTPDPGEPGSSADRPGGLVPTGDS) is disordered.

This sequence belongs to the complex I 30 kDa subunit family. In terms of assembly, NDH-1 is composed of 14 different subunits. Subunits NuoB, C, D, E, F, and G constitute the peripheral sector of the complex.

The protein resides in the cell membrane. It catalyses the reaction a quinone + NADH + 5 H(+)(in) = a quinol + NAD(+) + 4 H(+)(out). NDH-1 shuttles electrons from NADH, via FMN and iron-sulfur (Fe-S) centers, to quinones in the respiratory chain. The immediate electron acceptor for the enzyme in this species is believed to be a menaquinone. Couples the redox reaction to proton translocation (for every two electrons transferred, four hydrogen ions are translocated across the cytoplasmic membrane), and thus conserves the redox energy in a proton gradient. This Saccharopolyspora erythraea (strain ATCC 11635 / DSM 40517 / JCM 4748 / NBRC 13426 / NCIMB 8594 / NRRL 2338) protein is NADH-quinone oxidoreductase subunit C.